Here is a 134-residue protein sequence, read N- to C-terminus: Large ribosomal subunit protein uL22 (134 aa).

The protein belongs to the universal ribosomal protein uL22 family. In terms of assembly, part of the 50S ribosomal subunit.

In terms of biological role, this protein binds specifically to 23S rRNA; its binding is stimulated by other ribosomal proteins, e.g. L4, L17, and L20. It is important during the early stages of 50S assembly. It makes multiple contacts with different domains of the 23S rRNA in the assembled 50S subunit and ribosome. The globular domain of the protein is located near the polypeptide exit tunnel on the outside of the subunit, while an extended beta-hairpin is found that lines the wall of the exit tunnel in the center of the 70S ribosome. This chain is Large ribosomal subunit protein uL22, found in Gluconacetobacter diazotrophicus (strain ATCC 49037 / DSM 5601 / CCUG 37298 / CIP 103539 / LMG 7603 / PAl5).